Consider the following 286-residue polypeptide: MEIIIISGRSGAGKSVALRALEDIGYYCVDNLTMDLVPQLVDMLENKQHLVAISLDIRNLPQEPETLDHILNLLQEKYPVKIIFLDTDRNTLIRRYSDSRRLHPLSVQNLSLEAAIAAEKEHLEPLVQHANVIIDTTPLSPHELAERLREFLRGNTEKELQIIVESFGFKYGIPLDADYVFDVRFLPNPHWNQELRPMTGLEKPVIEFMQKHIEVDNFIYQTRNYIENWLPMLEKNNRSYLTIAIGCTGGKHRSVYIAQQIGEYFRAKGKKVQIQHKSLEKHTQNK.

Position 8–15 (G8–S15) interacts with ATP. Position 56–59 (D56–N59) interacts with GTP.

Belongs to the RapZ-like family.

In terms of biological role, displays ATPase and GTPase activities. This Histophilus somni (strain 129Pt) (Haemophilus somnus) protein is Nucleotide-binding protein HS_1178.